The chain runs to 578 residues: Septation ring formation regulator EzrA (578 aa).

The Extracellular portion of the chain corresponds to 1-8 (MKNNWIII). A helical membrane pass occupies residues 9-27 (LVLVIVIIAAVLYLIGYFM). At 28–578 (RKKNQEQLDE…NINNPNLTAI (551 aa)) the chain is on the cytoplasmic side. Coiled coils occupy residues 103 to 165 (RFMK…DDKA), 256 to 285 (QNFA…AAVE), and 394 to 490 (KILD…DDLE).

This sequence belongs to the EzrA family.

Its subcellular location is the cell membrane. Negative regulator of FtsZ ring formation; modulates the frequency and position of FtsZ ring formation. Inhibits FtsZ ring formation at polar sites. Interacts either with FtsZ or with one of its binding partners to promote depolymerization. This chain is Septation ring formation regulator EzrA, found in Enterococcus faecalis (strain ATCC 700802 / V583).